A 126-amino-acid polypeptide reads, in one-letter code: Aspartate 1-decarboxylase 1 (126 aa).

The active-site Schiff-base intermediate with substrate; via pyruvic acid is the Ser25. Ser25 bears the Pyruvic acid (Ser) mark. Thr57 is a substrate binding site. Tyr58 serves as the catalytic Proton donor. Gly73–Ala75 lines the substrate pocket.

The protein belongs to the PanD family. Heterooctamer of four alpha and four beta subunits. The cofactor is pyruvate. Is synthesized initially as an inactive proenzyme, which is activated by self-cleavage at a specific serine bond to produce a beta-subunit with a hydroxyl group at its C-terminus and an alpha-subunit with a pyruvoyl group at its N-terminus.

It localises to the cytoplasm. It carries out the reaction L-aspartate + H(+) = beta-alanine + CO2. The protein operates within cofactor biosynthesis; (R)-pantothenate biosynthesis; beta-alanine from L-aspartate: step 1/1. Functionally, catalyzes the pyruvoyl-dependent decarboxylation of aspartate to produce beta-alanine. The protein is Aspartate 1-decarboxylase 1 of Polaromonas sp. (strain JS666 / ATCC BAA-500).